Reading from the N-terminus, the 201-residue chain is Holliday junction branch migration complex subunit RuvA (201 aa).

The interval 1–64 is domain I; the sequence is MFAFLRGELV…EDAQQLFGFL (64 aa). The domain II stretch occupies residues 65–143; the sequence is DEEELQLFRL…KIQPAASGKT (79 aa). Residues 144–154 form a flexible linker region; sequence AGAPQALQLNE. Residues 154-201 form a domain III region; it reads EDALAALMTLGFPKPAAQKAISGILETSPGLSVEEVVRAALIAIHNNF.

The protein belongs to the RuvA family. As to quaternary structure, homotetramer. Forms an RuvA(8)-RuvB(12)-Holliday junction (HJ) complex. HJ DNA is sandwiched between 2 RuvA tetramers; dsDNA enters through RuvA and exits via RuvB. An RuvB hexamer assembles on each DNA strand where it exits the tetramer. Each RuvB hexamer is contacted by two RuvA subunits (via domain III) on 2 adjacent RuvB subunits; this complex drives branch migration. In the full resolvosome a probable DNA-RuvA(4)-RuvB(12)-RuvC(2) complex forms which resolves the HJ.

The protein resides in the cytoplasm. Its function is as follows. The RuvA-RuvB-RuvC complex processes Holliday junction (HJ) DNA during genetic recombination and DNA repair, while the RuvA-RuvB complex plays an important role in the rescue of blocked DNA replication forks via replication fork reversal (RFR). RuvA specifically binds to HJ cruciform DNA, conferring on it an open structure. The RuvB hexamer acts as an ATP-dependent pump, pulling dsDNA into and through the RuvAB complex. HJ branch migration allows RuvC to scan DNA until it finds its consensus sequence, where it cleaves and resolves the cruciform DNA. This is Holliday junction branch migration complex subunit RuvA from Chlorobaculum tepidum (strain ATCC 49652 / DSM 12025 / NBRC 103806 / TLS) (Chlorobium tepidum).